We begin with the raw amino-acid sequence, 365 residues long: 3-isopropylmalate dehydrogenase (365 aa).

Positions 96, 106, 134, and 224 each coordinate substrate. Positions 224, 248, and 252 each coordinate Mg(2+). An NAD(+)-binding site is contributed by 288–300; it reads GSAPTIAKQNIAN.

This sequence belongs to the isocitrate and isopropylmalate dehydrogenases family. LeuB type 1 subfamily. As to quaternary structure, homodimer. The cofactor is Mg(2+). Mn(2+) is required as a cofactor.

The protein resides in the cytoplasm. The catalysed reaction is (2R,3S)-3-isopropylmalate + NAD(+) = 4-methyl-2-oxopentanoate + CO2 + NADH. It functions in the pathway amino-acid biosynthesis; L-leucine biosynthesis; L-leucine from 3-methyl-2-oxobutanoate: step 3/4. Its function is as follows. Catalyzes the oxidation of 3-carboxy-2-hydroxy-4-methylpentanoate (3-isopropylmalate) to 3-carboxy-4-methyl-2-oxopentanoate. The product decarboxylates to 4-methyl-2 oxopentanoate. The sequence is that of 3-isopropylmalate dehydrogenase from Dehalococcoides mccartyi (strain ATCC BAA-2266 / KCTC 15142 / 195) (Dehalococcoides ethenogenes (strain 195)).